Consider the following 346-residue polypeptide: uncharacterized protein (346 aa).

The next 8 membrane-spanning stretches (helical) occupy residues 15-35 (YLRG…LLTV), 55-75 (VEAR…YLFI), 93-113 (ILVL…EALT), 139-159 (ILLL…PLIL), 182-202 (IFTF…YCYV), 229-249 (LGVA…LLLL), 269-289 (LTNY…FHLF), and 295-315 (LQSL…SAMW).

This sequence to E.coli YeiB, B.subtilis YxaH and B.subtilis YrkO.

It is found in the cell membrane. Its function is as follows. Involved in transport. This is an uncharacterized protein from Bacillus acidopullulyticus.